Consider the following 108-residue polypeptide: ATP synthase peripheral stalk subunit F6, mitochondrial (108 aa).

Residues 1–32 (MILQRLFRFSSVIRSAVSVHLRRNIGVTAVAF) constitute a mitochondrion transit peptide. An N6-acetyllysine mark is found at lysine 41 and lysine 46. Phosphoserine is present on serine 65. Residue lysine 79 is modified to N6-acetyllysine. 2 positions are modified to N6-acetyllysine; alternate: lysine 94 and lysine 99. Residues lysine 94 and lysine 99 each carry the N6-succinyllysine; alternate modification. The residue at position 105 (lysine 105) is an N6-acetyllysine.

It belongs to the eukaryotic ATPase subunit F6 family. As to quaternary structure, component of the ATP synthase complex composed at least of ATP5F1A/subunit alpha, ATP5F1B/subunit beta, ATP5MC1/subunit c (homooctomer), MT-ATP6/subunit a, MT-ATP8/subunit 8, ATP5ME/subunit e, ATP5MF/subunit f, ATP5MG/subunit g, ATP5MK/subunit k, ATP5MJ/subunit j, ATP5F1C/subunit gamma, ATP5F1D/subunit delta, ATP5F1E/subunit epsilon, ATP5PF/subunit F6, ATP5PB/subunit b, ATP5PD/subunit d, ATP5PO/subunit OSCP. ATP synthase complex consists of a soluble F(1) head domain (subunits alpha(3) and beta(3)) - the catalytic core - and a membrane F(0) domain - the membrane proton channel (subunits c, a, 8, e, f, g, k and j). These two domains are linked by a central stalk (subunits gamma, delta, and epsilon) rotating inside the F1 region and a stationary peripheral stalk (subunits F6, b, d, and OSCP).

It localises to the mitochondrion. The protein resides in the mitochondrion inner membrane. In terms of biological role, subunit F6, of the mitochondrial membrane ATP synthase complex (F(1)F(0) ATP synthase or Complex V) that produces ATP from ADP in the presence of a proton gradient across the membrane which is generated by electron transport complexes of the respiratory chain. ATP synthase complex consist of a soluble F(1) head domain - the catalytic core - and a membrane F(1) domain - the membrane proton channel. These two domains are linked by a central stalk rotating inside the F(1) region and a stationary peripheral stalk. During catalysis, ATP synthesis in the catalytic domain of F(1) is coupled via a rotary mechanism of the central stalk subunits to proton translocation. In vivo, can only synthesize ATP although its ATP hydrolase activity can be activated artificially in vitro. Part of the complex F(0) domain. Part of the complex F(0) domain and the peripheric stalk, which acts as a stator to hold the catalytic alpha(3)beta(3) subcomplex and subunit a/ATP6 static relative to the rotary elements. This Homo sapiens (Human) protein is ATP synthase peripheral stalk subunit F6, mitochondrial.